The chain runs to 178 residues: PRA1 family protein 2 (178 aa).

Topologically, residues 1-41 (MSEVRLPPLRALDDFVLGSARLVAPDPCDPQRWCHRVINNL) are cytoplasmic. Residues 42-62 (LYYQTNYLICFGLGLALAGYV) traverse the membrane as a helical segment. The Extracellular segment spans residues 63–64 (RP). The helical transmembrane segment at 65 to 85 (LHTLLSALVVAVALGMLVCAA) threads the bilayer. Topologically, residues 86–96 (ENRAAVRRCRR) are cytoplasmic. Residues 97 to 119 (SHPAACLAAVLAVGFLVLWAAGG) form a helical membrane-spanning segment. Residues 120–122 (AGT) lie on the Extracellular side of the membrane. Residues 123–140 (FLLSIAGPVLLILVHASL) traverse the membrane as a helical segment. Topologically, residues 141–178 (RLRNLKNKIENKIESIGLKRTPMGLLLEALGQEQEAGS) are cytoplasmic.

Belongs to the PRA1 family. In terms of assembly, interacts with CCR5 and GDE1.

It is found in the endosome membrane. Its function is as follows. May be involved in ER/Golgi transport and vesicular traffic. Plays a proapoptotic role in cerulenin-induced neuroblastoma apoptosis. The protein is PRA1 family protein 2 (PRAF2) of Bos taurus (Bovine).